Consider the following 120-residue polypeptide: Ribosome-binding factor A (120 aa).

This sequence belongs to the RbfA family. In terms of assembly, monomer. Binds 30S ribosomal subunits, but not 50S ribosomal subunits or 70S ribosomes.

Its subcellular location is the cytoplasm. Its function is as follows. One of several proteins that assist in the late maturation steps of the functional core of the 30S ribosomal subunit. Associates with free 30S ribosomal subunits (but not with 30S subunits that are part of 70S ribosomes or polysomes). Required for efficient processing of 16S rRNA. May interact with the 5'-terminal helix region of 16S rRNA. The sequence is that of Ribosome-binding factor A from Rickettsia rickettsii (strain Iowa).